A 675-amino-acid chain; its full sequence is PML-RARA-regulated adapter molecule 1 (675 aa).

Over residues 1–19 the composition is skewed to polar residues; it reads MGSNQDFRNLQAKFQTSQP. 2 disordered regions span residues 1–473 and 523–562; these read MGSN…GPIN and TDDS…PQQL. The span at 23–35 shows a compositional bias: basic and acidic residues; that stretch reads ELFRKTPKPELNK. A compositionally biased stretch (polar residues) spans 43–58; it reads TELSEQPKKSSQSELS. The span at 141 to 150 shows a compositional bias: basic and acidic residues; sequence PKPEFGELSK. 3 stretches are compositionally biased toward polar residues: residues 224–242, 251–264, and 322–331; these read RKSQ…SPSK, HSPQ…PKNN, and LQPSDLTRAS. At Ser374 the chain carries Phosphoserine. Residues 407-422 show a composition bias toward polar residues; that stretch reads SECSLPSASAGSSPQC. Positions 462–471 are enriched in pro residues; it reads PAKPALPPGP. Residues 537–546 show a composition bias toward polar residues; sequence LSTQQATRWP. Positions 578–656 constitute an SH3 domain; that stretch reads KAEREFRKKF…PRTALLPLET (79 aa).

In terms of assembly, interacts with SKAP2, LCP2 and DBNL. May interact with LYN. Interacts with NEK6. May be phosphorylated on tyrosines. As to expression, expressed in bone marrow and mature neutrophils. Weakly expressed in macrophages and mast cells.

In terms of biological role, may be involved in integrin signaling in neutrophils. Binds to PtdIns(4)P. This is PML-RARA-regulated adapter molecule 1 (Pram1) from Mus musculus (Mouse).